The sequence spans 273 residues: DnaJ homolog subfamily C member 27 (273 aa).

Residues 1–18 (MEASMPKRKEPGKSLRIK) are required for interaction with MAPK1. GTP-binding positions include 23–30 (GNAEVGKS), 71–75 (DMAGD), and 134–137 (NKID). A J domain is found at 217 to 273 (DSWDMLGVKPGASRDEVNKAYRKLAVLLHPDKCVAPGSEDAFKAVVNARTALLKNIK).

The protein belongs to the small GTPase superfamily. Rab family. As to quaternary structure, interacts directly with MAPK1 (wild-type and kinase-deficient forms). Interacts directly (in GTP-bound form) with MAP2K1 (wild-type and kinase-deficient forms).

The protein localises to the nucleus. In terms of biological role, GTPase which can activate the MEK/ERK pathway and induce cell transformation when overexpressed. May act as a nuclear scaffold for MAPK1, probably by association with MAPK1 nuclear export signal leading to enhanced ERK1/ERK2 signaling. The chain is DnaJ homolog subfamily C member 27 (DNAJC27) from Bos taurus (Bovine).